The chain runs to 97 residues: Aspartyl/glutamyl-tRNA(Asn/Gln) amidotransferase subunit C (97 aa).

The protein belongs to the GatC family. As to quaternary structure, heterotrimer of A, B and C subunits.

It catalyses the reaction L-glutamyl-tRNA(Gln) + L-glutamine + ATP + H2O = L-glutaminyl-tRNA(Gln) + L-glutamate + ADP + phosphate + H(+). The enzyme catalyses L-aspartyl-tRNA(Asn) + L-glutamine + ATP + H2O = L-asparaginyl-tRNA(Asn) + L-glutamate + ADP + phosphate + 2 H(+). Allows the formation of correctly charged Asn-tRNA(Asn) or Gln-tRNA(Gln) through the transamidation of misacylated Asp-tRNA(Asn) or Glu-tRNA(Gln) in organisms which lack either or both of asparaginyl-tRNA or glutaminyl-tRNA synthetases. The reaction takes place in the presence of glutamine and ATP through an activated phospho-Asp-tRNA(Asn) or phospho-Glu-tRNA(Gln). The polypeptide is Aspartyl/glutamyl-tRNA(Asn/Gln) amidotransferase subunit C (Listeria innocua serovar 6a (strain ATCC BAA-680 / CLIP 11262)).